The primary structure comprises 201 residues: Peptidyl-tRNA hydrolase (201 aa).

Tyrosine 17 contacts tRNA. The active-site Proton acceptor is the histidine 22. TRNA is bound by residues phenylalanine 76, asparagine 78, and asparagine 124.

Belongs to the PTH family. Monomer.

The protein resides in the cytoplasm. The catalysed reaction is an N-acyl-L-alpha-aminoacyl-tRNA + H2O = an N-acyl-L-amino acid + a tRNA + H(+). Functionally, hydrolyzes ribosome-free peptidyl-tRNAs (with 1 or more amino acids incorporated), which drop off the ribosome during protein synthesis, or as a result of ribosome stalling. Its function is as follows. Catalyzes the release of premature peptidyl moieties from peptidyl-tRNA molecules trapped in stalled 50S ribosomal subunits, and thus maintains levels of free tRNAs and 50S ribosomes. The sequence is that of Peptidyl-tRNA hydrolase from Oleidesulfovibrio alaskensis (strain ATCC BAA-1058 / DSM 17464 / G20) (Desulfovibrio alaskensis).